We begin with the raw amino-acid sequence, 256 residues long: Probable aquaporin TIP-type alpha (256 aa).

At 1–24 (MATRRYSFGRTDEATHPDSMRASL) the chain is on the cytoplasmic side. Phosphoserine; by CPK is present on Ser7. A helical membrane pass occupies residues 25–44 (AEFASTFIFVFAGEGSGLAL). The Vacuolar segment spans residues 45-57 (VKIYQDSAFSAGE). A helical membrane pass occupies residues 58 to 77 (LLALALAHAFALFAAVSASM). Residues 78 to 102 (HVSGGHVNPAVSFGALIGGRISVIR) lie on the Cytoplasmic side of the membrane. Residues 85–87 (NPA) carry the NPA 1 motif. A helical transmembrane segment spans residues 103-121 (AVYYWIAQLLGSIVAALVL). The Vacuolar segment spans residues 122–143 (RLVTNNMRPSGFHVSPGVGVGH). A helical membrane pass occupies residues 144-164 (MFILEVVMTFGLMYTVYGTAI). Over 165–169 (DPKRG) the chain is Cytoplasmic. A helical membrane pass occupies residues 170 to 189 (AVSYIAPLAIGLIVGANILV). The Vacuolar portion of the chain corresponds to 190 to 216 (GGPFDGACMNPALAFGPSLVGWQWHQH). Positions 199 to 201 (NPA) match the NPA 2 motif. Residues 217–239 (WIFWVGPLLGAALAALVYEYAVI) form a helical membrane-spanning segment. Residues 240–256 (PIEPPPHHHQPLATEDY) are Cytoplasmic-facing.

It belongs to the MIP/aquaporin (TC 1.A.8) family. TIP (TC 1.A.8.10) subfamily. Phosphorylated by a tonoplast-bound calcium-dependent protein kinase. In terms of tissue distribution, found in all seed tissues that are alive at seed maturity, but not in tissues that lose viability during seed maturation.

The protein localises to the vacuole membrane. Its function is as follows. Channel protein in tonoplast. These proteins may allow the diffusion of amino acids and/or peptides from the vacuolar compartment to the cytoplasm. This chain is Probable aquaporin TIP-type alpha, found in Phaseolus vulgaris (Kidney bean).